Consider the following 629-residue polypeptide: Long-chain-fatty-acid--AMP ligase FadD32 (629 aa).

ATP contacts are provided by residues 186–191 (TSGSTR), Ser341, Ala345, Asp468, and Arg482.

The protein belongs to the ATP-dependent AMP-binding enzyme family. In terms of assembly, monomer.

The catalysed reaction is a long-chain fatty acid + holo-[ACP] + ATP = a long-chain fatty acyl-[ACP] + AMP + diphosphate. It catalyses the reaction dodecanoate + ATP + H(+) = dodecanoyl-AMP + diphosphate. It carries out the reaction tetradecanoate + ATP + H(+) = tetradecanoyl-AMP + diphosphate. It functions in the pathway lipid metabolism; mycolic acid biosynthesis. The acyl-AMP ligase activity is inhibited by the alkylphosphate esters of AMP, adenosine 50-dodecylphosphate (AMPC12) and eicosyl-AMP (AMPC20). Its function is as follows. Involved in the biosynthesis of mycolic acids. Catalyzes the activation of long-chain fatty acids as acyl-adenylates (acyl-AMP), which are then transferred to the phosphopantetheine arm of the polyketide synthase Pks13 for further chain extension. Can use dodecanoate (C12) and tetradecanoate (C14). In Mycobacterium marinum (strain ATCC BAA-535 / M), this protein is Long-chain-fatty-acid--AMP ligase FadD32 (fadD32).